The primary structure comprises 498 residues: Ulvan-active sulfatase (498 aa).

A signal peptide spans 1–22; it reads MNSKKTGVIILGCIAFLHIACS. Residues aspartate 55, aspartate 56, cysteine 95, aspartate 266, and histidine 267 each contribute to the Ca(2+) site. Cysteine 95 acts as the Nucleophile in catalysis. At cysteine 95 the chain carries 3-oxoalanine (Cys).

It belongs to the sulfatase family. Ca(2+) is required as a cofactor. Post-translationally, the conversion to 3-oxoalanine (also known as C-formylglycine, FGly), of a serine or cysteine residue in prokaryotes and of a cysteine residue in eukaryotes, is critical for catalytic activity. This post-translational modification is severely defective in multiple sulfatase deficiency (MSD).

It localises to the periplasm. In terms of biological role, sulfatase involved in ulvan degradation. Ulvan is the main polysaccharide component of the Ulvales (green seaweed) cell wall. It is composed of disaccharide building blocks comprising 3-sulfated rhamnose (Rha3S) linked to D-glucuronic acid (GlcA), L-iduronic acid (IduA), or D-xylose (Xyl). The sequence is that of Ulvan-active sulfatase from Formosa agariphila (strain DSM 15362 / KCTC 12365 / LMG 23005 / KMM 3901 / M-2Alg 35-1).